The sequence spans 724 residues: Catalase-peroxidase (724 aa).

Positions 98–226 (WHSAGTYRIA…LATVMMGLIY (129 aa)) form a cross-link, tryptophyl-tyrosyl-methioninium (Trp-Tyr) (with M-252). H99 (proton acceptor) is an active-site residue. The segment at residues 226–252 (YVNPEGVDGNPDPLKTAQDMRVTFARM) is a cross-link (tryptophyl-tyrosyl-methioninium (Tyr-Met) (with W-98)). H267 is a heme b binding site.

This sequence belongs to the peroxidase family. Peroxidase/catalase subfamily. Homodimer or homotetramer. Heme b is required as a cofactor. In terms of processing, formation of the three residue Trp-Tyr-Met cross-link is important for the catalase, but not the peroxidase activity of the enzyme.

It carries out the reaction H2O2 + AH2 = A + 2 H2O. The enzyme catalyses 2 H2O2 = O2 + 2 H2O. In terms of biological role, bifunctional enzyme with both catalase and broad-spectrum peroxidase activity. In Vibrio cholerae serotype O1 (strain ATCC 39541 / Classical Ogawa 395 / O395), this protein is Catalase-peroxidase.